The sequence spans 1025 residues: Multidrug resistance protein MdtC (1025 aa).

A run of 12 helical transmembrane segments spans residues 3–23 (FFAL…AITL), 333–353 (EVEQ…FLFL), 360–380 (IIPA…MYLC), 387–407 (LSLM…IVVL), 431–451 (VGFT…PLLL), 463–483 (FAVT…TLTP), 528–548 (LVGV…ISIP), 853–873 (VILI…LYES), 875–895 (VHPL…LLAL), 897–917 (LFNA…IGIV), 953–973 (PIMM…LSGG), and 984–1004 (ITIV…TPVV).

Belongs to the resistance-nodulation-cell division (RND) (TC 2.A.6) family. MdtC subfamily. Part of a tripartite efflux system composed of MdtA, MdtB and MdtC. MdtC forms a heteromultimer with MdtB.

Its subcellular location is the cell inner membrane. Functionally, the MdtABC tripartite complex confers resistance against novobiocin and deoxycholate. The sequence is that of Multidrug resistance protein MdtC from Escherichia coli O1:K1 / APEC.